The primary structure comprises 422 residues: MDKLLIRGGRALHGEVTVSGAKNAALPELCAALLSSEPVTLRNVPRLQDVATMLKLIRNMGVSAEHDDSGTVRINAGSLSNPEAPYELVKTMRASVLALGPLLARFGQARVSLPGGCAIGSRPVDQHIKGLQAMGAEIVVENGYMNACLPGHLKRLQGARITTDMVTVTGTENFLMAAVLAEGETVLENAAMEPEIGDLAEMLIKMGARIEGHGTGRIVIQGVERLGGCEHQVVADRIEAGTFLCAVAATGGNALLRNGRADHLGAVIDKLKDAGAEVSAEDGGIRVRAAGKLKAQSFRTTEYPGFPTDMQAQFMALNLVAEGCSMVTETIFENRFMHVDEMLRLGAQITTDGRVATITGSQSLSGAAVMATDLRASASLVIAGLVAKGETLVDRIYHLDRGYDRMEDKLRGLGADIERVSQ.

Phosphoenolpyruvate is bound at residue 22 to 23 (KN). R93 contributes to the UDP-N-acetyl-alpha-D-glucosamine binding site. Residue C117 is the Proton donor of the active site. C117 carries the post-translational modification 2-(S-cysteinyl)pyruvic acid O-phosphothioketal. UDP-N-acetyl-alpha-D-glucosamine is bound by residues 122–126 (RPVDQ), D309, and I331.

Belongs to the EPSP synthase family. MurA subfamily.

It localises to the cytoplasm. The enzyme catalyses phosphoenolpyruvate + UDP-N-acetyl-alpha-D-glucosamine = UDP-N-acetyl-3-O-(1-carboxyvinyl)-alpha-D-glucosamine + phosphate. Its pathway is cell wall biogenesis; peptidoglycan biosynthesis. Its function is as follows. Cell wall formation. Adds enolpyruvyl to UDP-N-acetylglucosamine. The sequence is that of UDP-N-acetylglucosamine 1-carboxyvinyltransferase from Delftia acidovorans (strain DSM 14801 / SPH-1).